The chain runs to 421 residues: MSKTHLTEQKFSDFALHPQVVEALEKKRFYNCTPIQALALPLTLAGRDVAGQAQTGTGKTMAFLTSTFHYLLSHPAIDDRKVNQPRALIMAPTRELAVQIHADAEPLAQATGLKLGLAYGGDGYDKQLKVLESGVDILIGTTGRLIDYAKQNHINLGAIQVVVLDEADRMYDLGFIKDIRWLFRRMPPAAQRLNMLFSATLSYRVRELAFEQMNNAEYVEVEPEQKTGHRIKEELFYPSNEEKMRLLQTLIEEEWPDRAIIFANTKHRCEDIWGHLAADGHRVGLLTGDVAQKKRLRILDEFTRGDLDILVATDVAARGLHIPAVTHVFNYDLPDDCEDYVHRIGRTGRAGASGHSISLACEEYALNLPAIESYIGHSIPVSKYNPEALMNDLPKPLRLTRSRPGNGPRRAGAPRNRRRSG.

The Q motif signature appears at 9–37 (QKFSDFALHPQVVEALEKKRFYNCTPIQA). The region spanning 40 to 219 (LPLTLAGRDV…FEQMNNAEYV (180 aa)) is the Helicase ATP-binding domain. 53–60 (AQTGTGKT) lines the ATP pocket. The DEAD box signature appears at 165–168 (DEAD). In terms of domain architecture, Helicase C-terminal spans 245-390 (RLLQTLIEEE…VSKYNPEALM (146 aa)). Residues 396–421 (PLRLTRSRPGNGPRRAGAPRNRRRSG) are disordered. The span at 402–414 (SRPGNGPRRAGAP) shows a compositional bias: low complexity.

Belongs to the DEAD box helicase family. RhlB subfamily. As to quaternary structure, component of the RNA degradosome, which is a multiprotein complex involved in RNA processing and mRNA degradation.

Its subcellular location is the cytoplasm. The catalysed reaction is ATP + H2O = ADP + phosphate + H(+). Functionally, DEAD-box RNA helicase involved in RNA degradation. Has RNA-dependent ATPase activity and unwinds double-stranded RNA. This is ATP-dependent RNA helicase RhlB from Salmonella dublin (strain CT_02021853).